Reading from the N-terminus, the 1224-residue chain is DNA-directed RNA polymerase subunit beta'' (1224 aa).

Positions 223, 297, 304, and 307 each coordinate Zn(2+).

This sequence belongs to the RNA polymerase beta' chain family. RpoC2 subfamily. In terms of assembly, in plastids the minimal PEP RNA polymerase catalytic core is composed of four subunits: alpha, beta, beta', and beta''. When a (nuclear-encoded) sigma factor is associated with the core the holoenzyme is formed, which can initiate transcription. The cofactor is Zn(2+).

It localises to the plastid. The protein resides in the chloroplast. It carries out the reaction RNA(n) + a ribonucleoside 5'-triphosphate = RNA(n+1) + diphosphate. In terms of biological role, DNA-dependent RNA polymerase catalyzes the transcription of DNA into RNA using the four ribonucleoside triphosphates as substrates. The polypeptide is DNA-directed RNA polymerase subunit beta'' (Porphyra purpurea (Red seaweed)).